The following is a 620-amino-acid chain: Ion-translocating oxidoreductase complex subunit C (620 aa).

4Fe-4S ferredoxin-type domains are found at residues 366–397 (TEMG…QQLY) and 407–436 (KARN…VQYY). The [4Fe-4S] cluster site is built by cysteine 377, cysteine 380, cysteine 383, cysteine 387, cysteine 416, cysteine 419, cysteine 422, and cysteine 426.

This sequence belongs to the 4Fe4S bacterial-type ferredoxin family. RnfC subfamily. In terms of assembly, the complex is composed of six subunits: RnfA, RnfB, RnfC, RnfD, RnfE and RnfG. Requires [4Fe-4S] cluster as cofactor.

It is found in the cell inner membrane. Its function is as follows. Part of a membrane-bound complex that couples electron transfer with translocation of ions across the membrane. In Yersinia pestis bv. Antiqua (strain Antiqua), this protein is Ion-translocating oxidoreductase complex subunit C.